The primary structure comprises 184 residues: Leucine-rich repeat-containing protein 20 (184 aa).

LRR repeat units follow at residues 23-44, 51-72, 75-96, 98-120, 121-141, and 145-167; these read GSDT…IYKV, QIHL…FMTT, QLRE…VSSL, HLRA…TTLP, ALET…EKLA, and ALRV…APPL. A Phosphoserine modification is found at S175.

In Mus musculus (Mouse), this protein is Leucine-rich repeat-containing protein 20 (Lrrc20).